A 135-amino-acid chain; its full sequence is Type 3 secretion system stator protein (135 aa).

Belongs to the SctL stator family. As to quaternary structure, the core secretion machinery of the T3SS is composed of approximately 20 different proteins, including cytoplasmic components, a base, an export apparatus and a needle. This subunit is part of the cytosolic complex.

It localises to the cytoplasm. In terms of biological role, component of the type III secretion system (T3SS), also called injectisome, which is used to inject bacterial effector proteins into eukaryotic host cells. Acts as a regulator of the HrcN/SctN ATPase activity. This chain is Type 3 secretion system stator protein, found in Rhizobium fredii (Sinorhizobium fredii).